The primary structure comprises 107 residues: Probable monothiol glutaredoxin 2 (107 aa).

Positions 7 to 107 (LEFIQNAIKK…LEKMLKDVVV (101 aa)) constitute a Glutaredoxin domain. Glutathione is bound at residue Lys-24. Cys-32 serves as a coordination point for [2Fe-2S] cluster. Residues Arg-61, Phe-73, and 86–87 (CD) each bind glutathione.

This sequence belongs to the glutaredoxin family. Monothiol subfamily.

The polypeptide is Probable monothiol glutaredoxin 2 (grxC2) (Rickettsia prowazekii (strain Madrid E)).